A 250-amino-acid chain; its full sequence is Ditrans,polycis-undecaprenyl-diphosphate synthase ((2E,6E)-farnesyl-diphosphate specific) (250 aa).

Residue Asp20 is part of the active site. Mg(2+) is bound at residue Asp20. Substrate is bound by residues 21–24 (GNGR), Trp25, Arg33, His37, and 65–67 (SSE). Asn68 (proton acceptor) is an active-site residue. Substrate contacts are provided by residues Trp69, Arg71, Arg188, and 194-196 (RIS). Glu207 lines the Mg(2+) pocket.

This sequence belongs to the UPP synthase family. In terms of assembly, homodimer. Requires Mg(2+) as cofactor.

The catalysed reaction is 8 isopentenyl diphosphate + (2E,6E)-farnesyl diphosphate = di-trans,octa-cis-undecaprenyl diphosphate + 8 diphosphate. Its function is as follows. Catalyzes the sequential condensation of isopentenyl diphosphate (IPP) with (2E,6E)-farnesyl diphosphate (E,E-FPP) to yield (2Z,6Z,10Z,14Z,18Z,22Z,26Z,30Z,34E,38E)-undecaprenyl diphosphate (di-trans,octa-cis-UPP). UPP is the precursor of glycosyl carrier lipid in the biosynthesis of bacterial cell wall polysaccharide components such as peptidoglycan and lipopolysaccharide. In Vibrio cholerae serotype O1 (strain ATCC 39315 / El Tor Inaba N16961), this protein is Ditrans,polycis-undecaprenyl-diphosphate synthase ((2E,6E)-farnesyl-diphosphate specific).